The sequence spans 101 residues: Ubiquitin-related modifier 1 homolog (101 aa).

Gly101 carries the 1-thioglycine modification. A Glycyl lysine isopeptide (Gly-Lys) (interchain with K-? in acceptor proteins) cross-link involves residue Gly101.

The protein belongs to the URM1 family. As to quaternary structure, interacts with cer. In terms of processing, C-terminal thiocarboxylation occurs in 2 steps, it is first acyl-adenylated (-COAMP) via the hesA/moeB/thiF part of the MOCS3 homolog, then thiocarboxylated (-COSH) via the rhodanese domain of the MOCS3 homolog.

Its subcellular location is the cytoplasm. The protein operates within tRNA modification; 5-methoxycarbonylmethyl-2-thiouridine-tRNA biosynthesis. Functionally, acts as a sulfur carrier required for 2-thiolation of mcm(5)S(2)U at tRNA wobble positions of cytosolic tRNA(Lys), tRNA(Glu) and tRNA(Gln). Serves as sulfur donor in tRNA 2-thiolation reaction by being thiocarboxylated (-COSH) at its C-terminus by MOCS3. The sulfur is then transferred to tRNA to form 2-thiolation of mcm(5)S(2)U. Also acts as a ubiquitin-like protein (UBL) that is covalently conjugated via an isopeptide bond to lysine residues of target proteins such as Prx2/Jafrac1, Ciao1, Eip71CD and GILT1. The thiocarboxylated form serves as substrate for conjugation and oxidative stress specifically induces the formation of UBL-protein conjugates. The sequence is that of Ubiquitin-related modifier 1 homolog from Drosophila erecta (Fruit fly).